Consider the following 157-residue polypeptide: SsrA-binding protein (157 aa).

The tract at residues 133 to 157 (LHDKRESEKKRDWGREKGRLLRARG) is disordered. Residues 135–151 (DKRESEKKRDWGREKGR) show a composition bias toward basic and acidic residues.

Belongs to the SmpB family.

Its subcellular location is the cytoplasm. In terms of biological role, required for rescue of stalled ribosomes mediated by trans-translation. Binds to transfer-messenger RNA (tmRNA), required for stable association of tmRNA with ribosomes. tmRNA and SmpB together mimic tRNA shape, replacing the anticodon stem-loop with SmpB. tmRNA is encoded by the ssrA gene; the 2 termini fold to resemble tRNA(Ala) and it encodes a 'tag peptide', a short internal open reading frame. During trans-translation Ala-aminoacylated tmRNA acts like a tRNA, entering the A-site of stalled ribosomes, displacing the stalled mRNA. The ribosome then switches to translate the ORF on the tmRNA; the nascent peptide is terminated with the 'tag peptide' encoded by the tmRNA and targeted for degradation. The ribosome is freed to recommence translation, which seems to be the essential function of trans-translation. In Bradyrhizobium sp. (strain BTAi1 / ATCC BAA-1182), this protein is SsrA-binding protein.